Reading from the N-terminus, the 248-residue chain is Large ribosomal subunit protein uL10m (248 aa).

The transit peptide at 1–24 (MATLIQRSLSLAKSSTPALQFLRF) directs the protein to the mitochondrion.

Belongs to the universal ribosomal protein uL10 family. In terms of assembly, component of the mitochondrial ribosome large subunit (39S) which comprises a 16S rRNA and about 50 distinct proteins.

The protein localises to the mitochondrion. The protein is Large ribosomal subunit protein uL10m (mRpL10) of Drosophila melanogaster (Fruit fly).